A 1454-amino-acid chain; its full sequence is Coiled-coil domain-containing protein 18 (1454 aa).

Ser45 bears the Phosphoserine mark. 4 coiled-coil regions span residues 107-138 (APVD…HSLM), 170-402 (ILEE…ISQL), 438-464 (KLVI…NLTA), and 508-1309 (TMNK…SGHE). The segment at 828 to 851 (QKQRESSAEKLRKMEEKCESAAHE) is disordered. Ser1355 carries the phosphoserine modification.

Its subcellular location is the cytoplasm. It localises to the cytoskeleton. It is found in the microtubule organizing center. The protein resides in the centrosome. The protein localises to the centriolar satellite. The protein is Coiled-coil domain-containing protein 18 (CCDC18) of Homo sapiens (Human).